The sequence spans 346 residues: Large ribosomal subunit protein uL10 (346 aa).

Residues 305–346 (EVPAAPAPEAKEEKKEEAEEEEEEKKEVSEEDLSAGLGALFG) form a disordered region. A compositionally biased stretch (acidic residues) spans 322–337 (AEEEEEEKKEVSEEDL).

The protein belongs to the universal ribosomal protein uL10 family. As to quaternary structure, part of the 50S ribosomal subunit. Forms part of the ribosomal stalk which helps the ribosome interact with GTP-bound translation factors. Forms a heptameric L10(L12)2(L12)2(L12)2 complex, where L10 forms an elongated spine to which the L12 dimers bind in a sequential fashion.

Functionally, forms part of the ribosomal stalk, playing a central role in the interaction of the ribosome with GTP-bound translation factors. The chain is Large ribosomal subunit protein uL10 from Ignicoccus hospitalis (strain KIN4/I / DSM 18386 / JCM 14125).